The chain runs to 149 residues: Deoxyuridine 5'-triphosphate nucleotidohydrolase (149 aa).

Residues 70–72 (RSG), Asn83, and 87–89 (LID) each bind substrate.

This sequence belongs to the dUTPase family. Mg(2+) is required as a cofactor.

The catalysed reaction is dUTP + H2O = dUMP + diphosphate + H(+). It functions in the pathway pyrimidine metabolism; dUMP biosynthesis; dUMP from dCTP (dUTP route): step 2/2. In terms of biological role, this enzyme is involved in nucleotide metabolism: it produces dUMP, the immediate precursor of thymidine nucleotides and it decreases the intracellular concentration of dUTP so that uracil cannot be incorporated into DNA. The polypeptide is Deoxyuridine 5'-triphosphate nucleotidohydrolase (Blochmanniella pennsylvanica (strain BPEN)).